Here is an 868-residue protein sequence, read N- to C-terminus: Probable inorganic carbon transporter subunit DabA (868 aa).

Zn(2+)-binding residues include cysteine 392, aspartate 394, histidine 574, and cysteine 589.

Belongs to the inorganic carbon transporter (TC 9.A.2) DabA family. In terms of assembly, forms a complex with DabB. It depends on Zn(2+) as a cofactor.

The protein resides in the cell membrane. Its function is as follows. Part of an energy-coupled inorganic carbon pump. The protein is Probable inorganic carbon transporter subunit DabA of Bacillus cereus (strain G9842).